Reading from the N-terminus, the 124-residue chain is Large ribosomal subunit protein bL20c (124 aa).

It belongs to the bacterial ribosomal protein bL20 family.

The protein localises to the plastid. It is found in the chloroplast. Its function is as follows. Binds directly to 23S ribosomal RNA and is necessary for the in vitro assembly process of the 50S ribosomal subunit. It is not involved in the protein synthesizing functions of that subunit. This Stigeoclonium helveticum (Green alga) protein is Large ribosomal subunit protein bL20c.